The chain runs to 364 residues: MESYLRKWCLVSVWVLLLGLGFKVKAEPQVPCYFIFGDSLVDNGNNNRLRSIARADYFPYGIDFGGPTGRFSNGRTTVDVLTELLGFDNYIPAYSTVSGQEILQGVNYASAAAGIREETGAQLGQRITFSGQVENYKNTVAQVVEILGDEYTAADYLKRCIYSVGMGSNDYLNNYFMPQFYSTSRQYTPEQYADDLISRYRDQLNALYNYGARKFALVGIGAIGCSPNALAQGSQDGTTCVERINSANRIFNNRLISMVQQLNNAHSDASFTYINAYGAFQDIIANPSAYGFTNTNTACCGIGRNGGQLTCLPGEPPCLNRDEYVFWDAFHPSAAANTAIAKRSYNAQRSSDVYPIDISQLAQL.

The N-terminal stretch at 1-26 is a signal peptide; that stretch reads MESYLRKWCLVSVWVLLLGLGFKVKA. Ser-39 functions as the Nucleophile in the catalytic mechanism. Catalysis depends on charge relay system residues Asp-328 and His-331.

Belongs to the 'GDSL' lipolytic enzyme family. As to expression, found in phloem exudates.

It localises to the secreted. It is found in the extracellular space. The protein localises to the apoplast. Functionally, involved in EDS1-dependent systemic acquired resistance, maybe in phloem-mediated long-distance signaling. This chain is GDSL esterase/lipase At1g29660, found in Arabidopsis thaliana (Mouse-ear cress).